We begin with the raw amino-acid sequence, 347 residues long: NADH-ubiquinone oxidoreductase chain 2 (347 aa).

The next 10 helical transmembrane spans lie at 1–21 (MTPM…TLTL), 26–46 (WLLM…LLTY), 56–76 (AIKY…AASL), 96–116 (GIMT…YWVP), 153–171 (ILLT…NGLN), 178–198 (VMAY…IYFP), 199–219 (TLTT…FTVF), 237–257 (APIM…LPPL), 277–297 (IMAT…MRII), and 326–346 (LPTL…FITL).

It belongs to the complex I subunit 2 family. Core subunit of respiratory chain NADH dehydrogenase (Complex I) which is composed of 45 different subunits. Interacts with TMEM242.

It localises to the mitochondrion inner membrane. It catalyses the reaction a ubiquinone + NADH + 5 H(+)(in) = a ubiquinol + NAD(+) + 4 H(+)(out). Its function is as follows. Core subunit of the mitochondrial membrane respiratory chain NADH dehydrogenase (Complex I) which catalyzes electron transfer from NADH through the respiratory chain, using ubiquinone as an electron acceptor. Essential for the catalytic activity and assembly of complex I. The sequence is that of NADH-ubiquinone oxidoreductase chain 2 from Ornithorhynchus anatinus (Duckbill platypus).